Reading from the N-terminus, the 295-residue chain is Protoheme IX farnesyltransferase (295 aa).

9 helical membrane-spanning segments follow: residues 8–28 (VTKPGIIFGNLISVIGGFLLA), 35–55 (YTLFASTLVGVSLVVASGCVF), 84–104 (VSLVYATLLGIAGFMLLWFGA), 107–127 (LACWLGVMGFVVYVGVYSLYM), 132–152 (VYGTLIGSLSGAAPPVIGYCA), 162–182 (LILLAIFSLWQMPHSYAIAIF), 208–228 (ITLYIIAFAVATLMLSLGGYA), 233–253 (LVVAAAVSVWWLGMALRGYKV), and 264–284 (FVFSIVAITSLSVMMSVDFMV).

Belongs to the UbiA prenyltransferase family. Protoheme IX farnesyltransferase subfamily.

The protein localises to the cell inner membrane. It carries out the reaction heme b + (2E,6E)-farnesyl diphosphate + H2O = Fe(II)-heme o + diphosphate. It functions in the pathway porphyrin-containing compound metabolism; heme O biosynthesis; heme O from protoheme: step 1/1. In terms of biological role, converts heme B (protoheme IX) to heme O by substitution of the vinyl group on carbon 2 of heme B porphyrin ring with a hydroxyethyl farnesyl side group. The chain is Protoheme IX farnesyltransferase from Enterobacter sp. (strain 638).